Reading from the N-terminus, the 115-residue chain is Photosystem II reaction center Psb28 protein (115 aa).

This sequence belongs to the Psb28 family. In terms of assembly, part of the photosystem II complex.

The protein resides in the plastid. Its subcellular location is the chloroplast thylakoid membrane. The chain is Photosystem II reaction center Psb28 protein from Phaeodactylum tricornutum (strain CCAP 1055/1).